We begin with the raw amino-acid sequence, 341 residues long: Tetraacyldisaccharide 4'-kinase (341 aa).

Residue 54-61 (TVGGAGKT) participates in ATP binding.

This sequence belongs to the LpxK family.

The catalysed reaction is a lipid A disaccharide + ATP = a lipid IVA + ADP + H(+). Its pathway is glycolipid biosynthesis; lipid IV(A) biosynthesis; lipid IV(A) from (3R)-3-hydroxytetradecanoyl-[acyl-carrier-protein] and UDP-N-acetyl-alpha-D-glucosamine: step 6/6. Functionally, transfers the gamma-phosphate of ATP to the 4'-position of a tetraacyldisaccharide 1-phosphate intermediate (termed DS-1-P) to form tetraacyldisaccharide 1,4'-bis-phosphate (lipid IVA). The chain is Tetraacyldisaccharide 4'-kinase from Brucella melitensis biotype 1 (strain ATCC 23456 / CCUG 17765 / NCTC 10094 / 16M).